A 416-amino-acid chain; its full sequence is MNRFHISGPKNLSGEIKISGSKNAALPILLTSLLISEPIKLKNVPKLTDIMYAIKILTKLGVKIKVEKKVLYIDAKTIAICTIPDYLTKKTRASIWILGPLLARFGQAKISLPGGCKIGKRKIDLHLSGLKKLGANIAIKNNYIIGSVITKLIGNTIVLPIASVGATITIMSAATIATGITIINNAAREPEIIDVANFLNKLGAKIIGAGSKNIFITGVLKLHGGSYTIMPDRIETGTFLVAAAISNGSIICHNTKPNVLINLTKKLCETGAQIKTGTNWISLNMKGIYSKAINIKTAPYPGFPTDMQAIFSLLNLVSHGNSIVTETIFENRFSYVSELKKMGAKAQIKNNSLFCYGVKKLYSATVFASDLRSCASLILAGCIADGTTIVKNIHYIKRGYERFQEKLQSIGAKICN.

22–23 is a phosphoenolpyruvate binding site; sequence KN. Arg92 is a UDP-N-acetyl-alpha-D-glucosamine binding site. Cys116 acts as the Proton donor in catalysis. The residue at position 116 (Cys116) is a 2-(S-cysteinyl)pyruvic acid O-phosphothioketal. Asp306 and Ile328 together coordinate UDP-N-acetyl-alpha-D-glucosamine.

It belongs to the EPSP synthase family. MurA subfamily.

Its subcellular location is the cytoplasm. The enzyme catalyses phosphoenolpyruvate + UDP-N-acetyl-alpha-D-glucosamine = UDP-N-acetyl-3-O-(1-carboxyvinyl)-alpha-D-glucosamine + phosphate. It functions in the pathway cell wall biogenesis; peptidoglycan biosynthesis. Its function is as follows. Cell wall formation. Adds enolpyruvyl to UDP-N-acetylglucosamine. In Buchnera aphidicola subsp. Baizongia pistaciae (strain Bp), this protein is UDP-N-acetylglucosamine 1-carboxyvinyltransferase.